Reading from the N-terminus, the 431-residue chain is Enolase (431 aa).

(2R)-2-phosphoglycerate is bound at residue Gln-163. Catalysis depends on Glu-205, which acts as the Proton donor. 3 residues coordinate Mg(2+): Asp-242, Glu-288, and Asp-315. (2R)-2-phosphoglycerate contacts are provided by Lys-340, Arg-369, Ser-370, and Lys-391. The active-site Proton acceptor is the Lys-340.

This sequence belongs to the enolase family. Requires Mg(2+) as cofactor.

The protein localises to the cytoplasm. Its subcellular location is the secreted. It is found in the cell surface. It carries out the reaction (2R)-2-phosphoglycerate = phosphoenolpyruvate + H2O. It functions in the pathway carbohydrate degradation; glycolysis; pyruvate from D-glyceraldehyde 3-phosphate: step 4/5. In terms of biological role, catalyzes the reversible conversion of 2-phosphoglycerate (2-PG) into phosphoenolpyruvate (PEP). It is essential for the degradation of carbohydrates via glycolysis. This Bacillus cereus (strain ZK / E33L) protein is Enolase.